An 83-amino-acid chain; its full sequence is MAHKKGASSSRNGRDSNAQYLGVKKFGGEAVVAGNIIVRQRGTKFHPGENVGMGKDHTLFALKDGSVKFGVRRDRKVVDVIAA.

The protein belongs to the bacterial ribosomal protein bL27 family.

In Bifidobacterium adolescentis (strain ATCC 15703 / DSM 20083 / NCTC 11814 / E194a), this protein is Large ribosomal subunit protein bL27.